Here is a 385-residue protein sequence, read N- to C-terminus: 1-deoxy-D-xylulose 5-phosphate reductoisomerase (385 aa).

NADPH contacts are provided by threonine 10, glycine 11, serine 12, isoleucine 13, glycine 36, asparagine 38, and asparagine 121. A 1-deoxy-D-xylulose 5-phosphate-binding site is contributed by lysine 122. Glutamate 123 is an NADPH binding site. Aspartate 147 contacts Mn(2+). Serine 148, glutamate 149, serine 173, and histidine 196 together coordinate 1-deoxy-D-xylulose 5-phosphate. Glutamate 149 is a Mn(2+) binding site. NADPH is bound at residue glycine 202. Positions 209, 214, 215, and 218 each coordinate 1-deoxy-D-xylulose 5-phosphate. Glutamate 218 provides a ligand contact to Mn(2+).

It belongs to the DXR family. The cofactor is Mg(2+). It depends on Mn(2+) as a cofactor.

It catalyses the reaction 2-C-methyl-D-erythritol 4-phosphate + NADP(+) = 1-deoxy-D-xylulose 5-phosphate + NADPH + H(+). It participates in isoprenoid biosynthesis; isopentenyl diphosphate biosynthesis via DXP pathway; isopentenyl diphosphate from 1-deoxy-D-xylulose 5-phosphate: step 1/6. Catalyzes the NADPH-dependent rearrangement and reduction of 1-deoxy-D-xylulose-5-phosphate (DXP) to 2-C-methyl-D-erythritol 4-phosphate (MEP). The polypeptide is 1-deoxy-D-xylulose 5-phosphate reductoisomerase (Exiguobacterium sp. (strain ATCC BAA-1283 / AT1b)).